The chain runs to 92 residues: Acylphosphatase (92 aa).

The 88-residue stretch at 5 to 92 (GVTIYVYGRV…EDIADFIVRH (88 aa)) folds into the Acylphosphatase-like domain. Active-site residues include arginine 20 and asparagine 38.

It belongs to the acylphosphatase family.

It catalyses the reaction an acyl phosphate + H2O = a carboxylate + phosphate + H(+). This is Acylphosphatase (acyP) from Photorhabdus laumondii subsp. laumondii (strain DSM 15139 / CIP 105565 / TT01) (Photorhabdus luminescens subsp. laumondii).